The primary structure comprises 147 residues: Deoxyuridine 5'-triphosphate nucleotidohydrolase (147 aa).

Substrate-binding positions include 63–65 (RSG), Asn-76, and 80–82 (TID).

Belongs to the dUTPase family. It depends on Mg(2+) as a cofactor.

It catalyses the reaction dUTP + H2O = dUMP + diphosphate + H(+). The protein operates within pyrimidine metabolism; dUMP biosynthesis; dUMP from dCTP (dUTP route): step 2/2. Its function is as follows. This enzyme is involved in nucleotide metabolism: it produces dUMP, the immediate precursor of thymidine nucleotides and it decreases the intracellular concentration of dUTP so that uracil cannot be incorporated into DNA. In Chlamydia abortus (strain DSM 27085 / S26/3) (Chlamydophila abortus), this protein is Deoxyuridine 5'-triphosphate nucleotidohydrolase.